Consider the following 396-residue polypeptide: Elongation factor Tu (396 aa).

The region spanning 11–205 is the tr-type G domain; sequence KPHVNIGTIG…TVDEYVPTPE (195 aa). The segment at 20–27 is G1; that stretch reads GHVDHGKT. Position 20-27 (20-27) interacts with GTP; that stretch reads GHVDHGKT. T27 lines the Mg(2+) pocket. A G2 region spans residues 61–65; it reads GITIN. The interval 82–85 is G3; that stretch reads DAPG. GTP is bound by residues 82-86 and 137-140; these read DAPGH and NKTD. Residues 137-140 form a G4 region; the sequence is NKTD. Positions 175–177 are G5; it reads SAL.

It belongs to the TRAFAC class translation factor GTPase superfamily. Classic translation factor GTPase family. EF-Tu/EF-1A subfamily. Monomer.

The protein resides in the cytoplasm. The enzyme catalyses GTP + H2O = GDP + phosphate + H(+). In terms of biological role, GTP hydrolase that promotes the GTP-dependent binding of aminoacyl-tRNA to the A-site of ribosomes during protein biosynthesis. The protein is Elongation factor Tu of Latilactobacillus sakei subsp. sakei (strain 23K) (Lactobacillus sakei subsp. sakei).